Reading from the N-terminus, the 451-residue chain is MMSILWSLAAFIVALGILITVHEFGHFWVARRCGVRVERFSIGFGKALWRRTDRQGTEYVIALIPLGGYVKMLDERVEAVAPELRHQSFNNKTVLQRAAIVSAGPIANFLFAIVAYWLVFIIGVPSVRPVIGDISPQSIAAQANISSGMELKSVDGIETPDWDSVRLALISRIGDKQMQVGVAPFGSDNVVEKTLDLRQWQFEPDKQDPVVALGIIPRGPQIESVLAEVQPGSAAQKAGLQAGDRIVKVNGQLLDRWQTFVLQVRDNPGQPLVLDIERESTPLSLTLIPDTKSVGENRSEGFAGVVPKVIPLPDEYKTIRQYGPFTAVYQAGDKTWQLMRLTVSMLGKLITGDVKLNNLSGPISIAQGAGLSAEYGLVYYLMFLALISVNLGIINLFPLPVLDGGHLLFLAIEKLKGGPVSERVQDFSYRIGSILLVLLMGLALFNDFSRL.

His22 provides a ligand contact to Zn(2+). Glu23 is a catalytic residue. His26 contacts Zn(2+). Residues 98-120 (AAIVSAGPIANFLFAIVAYWLVF) traverse the membrane as a helical segment. 2 consecutive PDZ domains span residues 115–186 (AYWL…APFG) and 199–280 (QWQF…ERES). 2 helical membrane-spanning segments follow: residues 377–399 (LVYY…LFPL) and 427–446 (FSYR…ALFN).

The protein belongs to the peptidase M50B family. Interacts with RseA. The cofactor is Zn(2+).

The protein resides in the cell inner membrane. In terms of biological role, a site-2 regulated intramembrane protease (S2P) that cleaves the peptide bond between 'Ala-108' and 'Cys-109' in the transmembrane region of RseA. Part of a regulated intramembrane proteolysis (RIP) cascade. Acts on DegS-cleaved RseA to release the cytoplasmic domain of RseA. This provides the cell with sigma-E (RpoE) activity through the proteolysis of RseA. This is Protease RseP (rseP) from Yersinia pestis.